Consider the following 440-residue polypeptide: Chromosome partition protein MukF (440 aa).

Residues 208–236 (LSETSGTLRELQDTLEAAGDKLQANLLRI) form a leucine-zipper region.

This sequence belongs to the MukF family. Interacts, and probably forms a ternary complex, with MukE and MukB via its C-terminal region. The complex formation is stimulated by calcium or magnesium. It is required for an interaction between MukE and MukB.

It is found in the cytoplasm. The protein resides in the nucleoid. Involved in chromosome condensation, segregation and cell cycle progression. May participate in facilitating chromosome segregation by condensation DNA from both sides of a centrally located replisome during cell division. Not required for mini-F plasmid partitioning. Probably acts via its interaction with MukB and MukE. Overexpression results in anucleate cells. It has a calcium binding activity. This Escherichia coli (strain ATCC 8739 / DSM 1576 / NBRC 3972 / NCIMB 8545 / WDCM 00012 / Crooks) protein is Chromosome partition protein MukF.